We begin with the raw amino-acid sequence, 150 residues long: MTGIRISVQTLPHFEGLSLPRYMSEHAAGMDICAAVADEVVILPGERALIPTGIAIALPEGFEAQIRPRSGLALKHGVTLVNAPGTIDADYRGEIGVLLINHGNDPFVVARGSRVAQMVIAPVCRVAWSESGSLETTTRGDGGFGHTDES.

Residues 69-71 (RSG), Asn-82, and 86-88 (TID) contribute to the substrate site.

This sequence belongs to the dUTPase family. Mg(2+) serves as cofactor.

The catalysed reaction is dUTP + H2O = dUMP + diphosphate + H(+). It participates in pyrimidine metabolism; dUMP biosynthesis; dUMP from dCTP (dUTP route): step 2/2. In terms of biological role, this enzyme is involved in nucleotide metabolism: it produces dUMP, the immediate precursor of thymidine nucleotides and it decreases the intracellular concentration of dUTP so that uracil cannot be incorporated into DNA. This is Deoxyuridine 5'-triphosphate nucleotidohydrolase from Syntrophus aciditrophicus (strain SB).